The following is a 199-amino-acid chain: Chaperone protein TorD (199 aa).

It belongs to the TorD/DmsD family. TorD subfamily.

Its subcellular location is the cytoplasm. Functionally, involved in the biogenesis of TorA. Acts on TorA before the insertion of the molybdenum cofactor and, as a result, probably favors a conformation of the apoenzyme that is competent for acquiring the cofactor. The chain is Chaperone protein TorD from Escherichia coli O6:H1 (strain CFT073 / ATCC 700928 / UPEC).